Here is a 180-residue protein sequence, read N- to C-terminus: MKKVLLPLAALVLSATASNAMAANGTVKFTGEIKQSTCQVTSDTQNKEVYLGTYPTSAFPTVGSKSASKAFQISLEKCDAGDYSLRFDGNTVAGNPDLLSVSNVGGTGAAATGVGIEITDNNGKPFAIGDGSNINDDVAKVTIAADGKATFNLQARYRSFDSNVTAGLANATSPFTIEYK.

The first 22 residues, 1–22 (MKKVLLPLAALVLSATASNAMA), serve as a signal peptide directing secretion. Cys38 and Cys78 are joined by a disulfide.

It belongs to the fimbrial protein family.

The protein localises to the fimbrium. Fimbriae (also called pili), polar filaments radiating from the surface of the bacterium to a length of 0.5-1.5 micrometers and numbering 100-300 per cell, enable bacteria to colonize the epithelium of specific host organs. The protein is Type-1 fimbrial protein subunit (fimA) of Serratia marcescens.